Here is a 101-residue protein sequence, read N- to C-terminus: Small ribosomal subunit protein uS14 (101 aa).

The protein belongs to the universal ribosomal protein uS14 family. As to quaternary structure, part of the 30S ribosomal subunit. Contacts proteins S3 and S10.

Functionally, binds 16S rRNA, required for the assembly of 30S particles and may also be responsible for determining the conformation of the 16S rRNA at the A site. The sequence is that of Small ribosomal subunit protein uS14 from Delftia acidovorans (strain DSM 14801 / SPH-1).